Here is a 150-residue protein sequence, read N- to C-terminus: HTH-type transcriptional regulator LrpA (150 aa).

An HTH asnC-type domain is found at 5–66 (LDDIDRILVR…RINPEAVGHL (62 aa)). Residues 24 to 43 (LSELATRAGLSVSAVQSRVR) constitute a DNA-binding region (H-T-H motif). L-phenylalanine contacts are provided by valine 100, glycine 102, and glutamate 104.

Homohexadecamer in the absence of any added ligand. Homooctamer. Tetramer of dimers. In the presence of phenylalanine, the hexadecamer dissociates into an octamer, which further dissociates partially into lower-order oligomers.

With respect to regulation, the DNA-binding activity of LrpA is modulated by interaction of LrpA with various effector molecules, including amino acids and vitamins. The DNA binding affinity is decreased by several amino acids, including phenylalanine, tyrosine, tryptophan, histidine, leucine and aspartate. Preferentially binds to aromatic amino acids. Besides amino acids, the binding affinity is also reduced by vitamins, including B1, B3, B6, VC, B7, B9, B12, VA and VK3. Functionally, transcriptional regulator that probably plays an important role in M.tuberculosis persistence. Regulates the expression of several genes, including lat, rsmG, whiB2, lsr2 and Rv2011c. Acts by binding directly to the promoter region of the target genes. This chain is HTH-type transcriptional regulator LrpA, found in Mycobacterium tuberculosis (strain ATCC 25618 / H37Rv).